The sequence spans 369 residues: Deacetylase EF_0837 (369 aa).

The Zn(2+) site is built by H58, H60, K152, H186, H209, and D270. At K152 the chain carries N6-carboxylysine.

This sequence belongs to the metallo-dependent hydrolases superfamily. Atu3266/EF_0837 deacetylase family. It depends on Zn(2+) as a cofactor.

In terms of biological role, esterase that can catalyze the deacetylation of acetyl-(R)-mandelate, but with very low efficiency (in vitro). The protein is Deacetylase EF_0837 of Enterococcus faecalis (strain ATCC 700802 / V583).